The chain runs to 643 residues: MSISSKTEDSDIRSSVMTDHGPSGMKRLAGLSLAALGVVFGDIGTSPLYAVRECFHGEYGITASAGNVLGVLSLLFWALVLIVGLKYLTFIMRADNDGEGGILALTALIITHSRNRGYERWLLVAIGLFGASLLYGDGMITPAISVLSAIEGLQIIAPAFHEMVIPLTMLVLAGLFLFQHNGTARVGALFGPIILLWFIAIAILGIIEIVKYPQVLQAMLPWHGISFLLGNNLKGFTVLGAVFLSVTGAEALYADMGHFGRRPIRITWFLLVLPALLLNYFGQGALLLSSPGEAHHPFYGLVPSWAMIPMVLLATSATIIASQALITGVFSLTQQAIQLGYLPRLTVTHTSARHMGQIYVPAANWSLMVGTIGIVAWFGSSSKLAAAYGVAVTATMLISTILFYYIARDLWKWNPAALNVMITFFAAIDLSFFGASMSKLFHGAWVPLAVALVMFTIMNTWKQGRKLLMRQLQDRTLTVDEFIRSLALQQPQRVPGQVVYLTANPDVVPIALLHNLRHNKVLHSEVALFHFSNERVPRVPNSRKIEVDRLGDGFTRVIARYGFLEYPNISQVLALANQQGLNFKPEGISFFLSREKIVAGEKTKMFPSRKKLFALMARNALSATAYYDLPSGQVIEIGVQVQI.

Residues 1–12 (MSISSKTEDSDI) are compositionally biased toward basic and acidic residues. The disordered stretch occupies residues 1–20 (MSISSKTEDSDIRSSVMTDH). Helical transmembrane passes span 28 to 48 (LAGL…TSPL), 65 to 85 (AGNV…IVGL), 121 to 141 (WLLV…GMIT), 158 to 178 (PAFH…LFLF), 187 to 207 (GALF…LGII), 224 to 244 (GISF…AVFL), 268 to 288 (WFLL…ALLL), 301 to 321 (LVPS…TIIA), 358 to 378 (IYVP…VAWF), 384 to 404 (LAAA…ILFY), 415 to 435 (PAAL…FFGA), and 440 to 460 (LFHG…IMNT).

The protein belongs to the HAK/KUP transporter (TC 2.A.72) family.

The protein resides in the cell inner membrane. It catalyses the reaction K(+)(in) + H(+)(in) = K(+)(out) + H(+)(out). Transport of potassium into the cell. Likely operates as a K(+):H(+) symporter. This chain is Probable potassium transport system protein Kup, found in Chlorobium luteolum (strain DSM 273 / BCRC 81028 / 2530) (Pelodictyon luteolum).